Here is a 284-residue protein sequence, read N- to C-terminus: Tropomyosin-1 (284 aa).

A coiled-coil region spans residues 1–284; sequence MDGIKKKMIA…DQTFAELTGY (284 aa). Positions 111–131 are disordered; sequence TKLEEASKTAEESERGRKDLE.

Belongs to the tropomyosin family. In terms of assembly, homodimer.

Its function is as follows. Tropomyosin, in association with the troponin complex, plays a central role in the calcium dependent regulation of muscle contraction. The chain is Tropomyosin-1 from Schistosoma mansoni (Blood fluke).